A 242-amino-acid chain; its full sequence is Uridylate kinase (242 aa).

ATP is bound at residue 16–19; it reads KVSG. UMP is bound at residue Gly-58. ATP is bound by residues Gly-59 and Arg-63. Residues Asp-78 and 139–146 contribute to the UMP site; that span reads TGNPFCTT. Thr-166, Gln-167, Tyr-172, and Asp-175 together coordinate ATP.

Belongs to the UMP kinase family. Homohexamer.

The protein resides in the cytoplasm. The catalysed reaction is UMP + ATP = UDP + ADP. It participates in pyrimidine metabolism; CTP biosynthesis via de novo pathway; UDP from UMP (UMPK route): step 1/1. Inhibited by UTP. In terms of biological role, catalyzes the reversible phosphorylation of UMP to UDP. This chain is Uridylate kinase, found in Rickettsia canadensis (strain McKiel).